A 355-amino-acid polypeptide reads, in one-letter code: UDP-N-acetylglucosamine--N-acetylmuramyl-(pentapeptide) pyrophosphoryl-undecaprenol N-acetylglucosamine transferase (355 aa).

UDP-N-acetyl-alpha-D-glucosamine-binding positions include 15 to 17 (TGG), Asn-127, Arg-163, Ser-191, Ile-244, 263 to 268 (ALTVSE), and Gln-288.

It belongs to the glycosyltransferase 28 family. MurG subfamily.

The protein resides in the cell inner membrane. The catalysed reaction is di-trans,octa-cis-undecaprenyl diphospho-N-acetyl-alpha-D-muramoyl-L-alanyl-D-glutamyl-meso-2,6-diaminopimeloyl-D-alanyl-D-alanine + UDP-N-acetyl-alpha-D-glucosamine = di-trans,octa-cis-undecaprenyl diphospho-[N-acetyl-alpha-D-glucosaminyl-(1-&gt;4)]-N-acetyl-alpha-D-muramoyl-L-alanyl-D-glutamyl-meso-2,6-diaminopimeloyl-D-alanyl-D-alanine + UDP + H(+). The protein operates within cell wall biogenesis; peptidoglycan biosynthesis. Its function is as follows. Cell wall formation. Catalyzes the transfer of a GlcNAc subunit on undecaprenyl-pyrophosphoryl-MurNAc-pentapeptide (lipid intermediate I) to form undecaprenyl-pyrophosphoryl-MurNAc-(pentapeptide)GlcNAc (lipid intermediate II). The sequence is that of UDP-N-acetylglucosamine--N-acetylmuramyl-(pentapeptide) pyrophosphoryl-undecaprenol N-acetylglucosamine transferase from Shigella boydii serotype 18 (strain CDC 3083-94 / BS512).